Consider the following 256-residue polypeptide: NifU-like protein, mitochondrial (256 aa).

Residues 196-199 (CTSC) carry the CxxC motif motif.

It belongs to the NifU family. Homodimer; in absence of BOL3, probably bridged by an iron-sulfure cluster. Interacts with BOL3. Interacts with apo-target proteins, such as ACO1, LYS4, ACO2 and SDH2.

The protein localises to the mitochondrion matrix. In terms of biological role, involved in iron homeostasis within the mitochondrion where it is involved in the assembly of iron-sulfur proteins. Together with BOL3, required during the last step of iron-sulfur protein assembly when the iron-sulfur cluster is inserted into the target protein. Required for protecting iron sulfur clusters from oxidative damage. The polypeptide is NifU-like protein, mitochondrial (NFU1) (Saccharomyces cerevisiae (strain ATCC 204508 / S288c) (Baker's yeast)).